We begin with the raw amino-acid sequence, 485 residues long: NADH-quinone oxidoreductase subunit N (485 aa).

14 helical membrane-spanning segments follow: residues 8-28 (LIAL…MLSI), 35-55 (FLNA…LWFV), 71-91 (GFAM…CTFA), 105-125 (FYLL…ANHL), 127-147 (ALFL…GYAF), 159-179 (YTIL…LVYA), 203-223 (LLAG…LVPF), 235-255 (PAPV…GVVM), 271-291 (VVLG…ALSQ), 297-317 (LLGY…IALQ), 326-346 (VGVY…VVSL), 373-393 (AAVM…LGFI), 408-430 (WWLV…RVAV), and 455-475 (IVVL…QPLI).

The protein belongs to the complex I subunit 2 family. In terms of assembly, NDH-1 is composed of 13 different subunits. Subunits NuoA, H, J, K, L, M, N constitute the membrane sector of the complex.

It is found in the cell inner membrane. It catalyses the reaction a quinone + NADH + 5 H(+)(in) = a quinol + NAD(+) + 4 H(+)(out). Functionally, NDH-1 shuttles electrons from NADH, via FMN and iron-sulfur (Fe-S) centers, to quinones in the respiratory chain. The immediate electron acceptor for the enzyme in this species is believed to be ubiquinone. Couples the redox reaction to proton translocation (for every two electrons transferred, four hydrogen ions are translocated across the cytoplasmic membrane), and thus conserves the redox energy in a proton gradient. The sequence is that of NADH-quinone oxidoreductase subunit N from Salmonella gallinarum (strain 287/91 / NCTC 13346).